The following is a 316-amino-acid chain: tRNA dimethylallyltransferase (316 aa).

17–24 is a binding site for ATP; it reads GPTASGKT. 19–24 contacts substrate; that stretch reads TASGKT. Interaction with substrate tRNA stretches follow at residues 42–45, 166–170, and 247–252; these read DSAL, QRLSR, and RCVGYR.

It belongs to the IPP transferase family. In terms of assembly, monomer. Mg(2+) is required as a cofactor.

It carries out the reaction adenosine(37) in tRNA + dimethylallyl diphosphate = N(6)-dimethylallyladenosine(37) in tRNA + diphosphate. Catalyzes the transfer of a dimethylallyl group onto the adenine at position 37 in tRNAs that read codons beginning with uridine, leading to the formation of N6-(dimethylallyl)adenosine (i(6)A). The polypeptide is tRNA dimethylallyltransferase (Salmonella arizonae (strain ATCC BAA-731 / CDC346-86 / RSK2980)).